Consider the following 221-residue polypeptide: Glutathione S-transferase Z1 (221 aa).

Residues 7 to 88 (EKLKLYSYWR…YLDEKYPEPP (82 aa)) form the GST N-terminal domain. Glutathione is bound by residues 17-18 (SS), 17-22 (SSCAHR), Gln46, 46-47 (QF), 59-60 (TV), Val60, 72-73 (DS), Gln112, and 116-118 (NLA). One can recognise a GST C-terminal domain in the interval 93–218 (DLHKRAVNYQ…LPEKQPDAPS (126 aa)).

Belongs to the GST superfamily. Zeta family. As to quaternary structure, homodimer.

It is found in the cytoplasm. The protein resides in the cytosol. The catalysed reaction is RX + glutathione = an S-substituted glutathione + a halide anion + H(+). Its function is as follows. Acts a maleylacetone isomerase. Also catalyzes the glutathione-dependent dehalogenation of dichloroacetic acid to glyoxylic acid. In vitro, possesses glutathione peroxidase activity toward cumene hydroperoxide and linoleic acid-13-hydroperoxide. In Arabidopsis thaliana (Mouse-ear cress), this protein is Glutathione S-transferase Z1 (GSTZ1).